Reading from the N-terminus, the 378-residue chain is Branched-chain-amino-acid aminotransferase (378 aa).

Residue K213 is modified to N6-(pyridoxal phosphate)lysine.

It belongs to the class-IV pyridoxal-phosphate-dependent aminotransferase family. Homodimer. It depends on pyridoxal 5'-phosphate as a cofactor.

The catalysed reaction is L-leucine + 2-oxoglutarate = 4-methyl-2-oxopentanoate + L-glutamate. It catalyses the reaction L-isoleucine + 2-oxoglutarate = (S)-3-methyl-2-oxopentanoate + L-glutamate. It carries out the reaction L-valine + 2-oxoglutarate = 3-methyl-2-oxobutanoate + L-glutamate. Functionally, catalyzes the first reaction in the catabolism of the essential branched chain amino acids leucine, isoleucine, and valine. The protein is Branched-chain-amino-acid aminotransferase (bcaA) of Dictyostelium discoideum (Social amoeba).